A 419-amino-acid polypeptide reads, in one-letter code: Light-dependent chlorophyll f synthase (419 aa).

5 helical membrane-spanning segments follow: residues 73 to 90 (YIGW…TAAI), 162 to 177 (HFII…EWEL), 186 to 200 (WISL…ASVS), 241 to 262 (LHQM…HGSL), and 323 to 337 (CLAA…SAAI). His-162 contacts a chlorophyll. His-242 lines the a chlorophyll pocket.

This sequence belongs to the reaction center PufL/M/PsbA/D family. As to quaternary structure, homodimer.

The protein localises to the cellular thylakoid membrane. In terms of biological role, synthesizes chlorophyll f or chlorophyllide f (Chl f, 2-formyl chlorophyll a), probably by oxidation of chlorophyll a or chlorophyllide a and reduction of plastoquinone. The reaction is probably light-dependent. Chl f absorbs far red light (FRL, 707 nm in 100% methanol), and is synthesized when cells are grown in FRL, where it provides the advantage of extending the spectral range of harvested light in terrestrial cyanobacteria. Chl f synthesis is probably light-dependent. This chain is Light-dependent chlorophyll f synthase, found in Synechococcus sp. (strain ATCC 29403 / PCC 7335).